The sequence spans 351 residues: Hydroxymethylglutaryl-CoA synthase (351 aa).

Glutamate 80 serves as the catalytic Proton donor/acceptor. Cysteine 112 functions as the Acyl-thioester intermediate in the catalytic mechanism. Residues cysteine 112 and serine 153 each contribute to the (3S)-3-hydroxy-3-methylglutaryl-CoA site. Arginine 199 is a CoA binding site. Positions 201 and 234 each coordinate (3S)-3-hydroxy-3-methylglutaryl-CoA. Histidine 234 (proton donor/acceptor) is an active-site residue. Position 239 (lysine 239) interacts with CoA. (3S)-3-hydroxy-3-methylglutaryl-CoA-binding residues include arginine 243, asparagine 266, and serine 296.

It belongs to the thiolase-like superfamily. Archaeal HMG-CoA synthase family. Interacts with acetoacetyl-CoA thiolase that catalyzes the precedent step in the pathway and with a DUF35 protein. The acetoacetyl-CoA thiolase/HMG-CoA synthase complex channels the intermediate via a fused CoA-binding site, which allows for efficient coupling of the endergonic thiolase reaction with the exergonic HMGCS reaction.

It catalyses the reaction acetoacetyl-CoA + acetyl-CoA + H2O = (3S)-3-hydroxy-3-methylglutaryl-CoA + CoA + H(+). The protein operates within metabolic intermediate biosynthesis; (R)-mevalonate biosynthesis; (R)-mevalonate from acetyl-CoA: step 2/3. Functionally, catalyzes the condensation of acetyl-CoA with acetoacetyl-CoA to form 3-hydroxy-3-methylglutaryl-CoA (HMG-CoA). Functions in the mevalonate (MVA) pathway leading to isopentenyl diphosphate (IPP), a key precursor for the biosynthesis of isoprenoid compounds that are building blocks of archaeal membrane lipids. This Thermoplasma volcanium (strain ATCC 51530 / DSM 4299 / JCM 9571 / NBRC 15438 / GSS1) protein is Hydroxymethylglutaryl-CoA synthase.